Here is a 406-residue protein sequence, read N- to C-terminus: L-cysteine:1D-myo-inositol 2-amino-2-deoxy-alpha-D-glucopyranoside ligase (406 aa).

Cysteine 45 contributes to the Zn(2+) binding site. L-cysteinyl-5'-AMP contacts are provided by residues 45–48 (CGIT), threonine 60, and 83–85 (NIT). A 'HIGH' region motif is present at residues 47 to 57 (ITPYDATHMGH). A 'ERGGDP' region motif is present at residues 185-190 (ERGGDP). An L-cysteinyl-5'-AMP-binding site is contributed by tryptophan 225. Cysteine 229 contributes to the Zn(2+) binding site. 247–249 (GSD) is a binding site for L-cysteinyl-5'-AMP. Histidine 254 provides a ligand contact to Zn(2+). Valine 281 provides a ligand contact to L-cysteinyl-5'-AMP. The short motif at 287–291 (KMSKS) is the 'KMSKS' region element.

This sequence belongs to the class-I aminoacyl-tRNA synthetase family. MshC subfamily. Monomer. Requires Zn(2+) as cofactor.

It catalyses the reaction 1D-myo-inositol 2-amino-2-deoxy-alpha-D-glucopyranoside + L-cysteine + ATP = 1D-myo-inositol 2-(L-cysteinylamino)-2-deoxy-alpha-D-glucopyranoside + AMP + diphosphate + H(+). Functionally, catalyzes the ATP-dependent condensation of GlcN-Ins and L-cysteine to form L-Cys-GlcN-Ins. The chain is L-cysteine:1D-myo-inositol 2-amino-2-deoxy-alpha-D-glucopyranoside ligase from Kribbella flavida (strain DSM 17836 / JCM 10339 / NBRC 14399).